Consider the following 1008-residue polypeptide: Envelopment polyprotein (1008 aa).

A signal peptide spans 1–17 (MVRTYLLLLLLCGPATP). The Lumenal segment spans residues 18-394 (FFNHLMDVTR…NWANIHCFSK (377 aa)). Residues Asn-34, Asn-70, and Asn-108 are each glycosylated (N-linked (GlcNAc...) asparagine; by host). 8 cysteine pairs are disulfide-bonded: Cys-138/Cys-269, Cys-156/Cys-166, Cys-206/Cys-247, Cys-216/Cys-226, Cys-233/Cys-238, Cys-292/Cys-295, Cys-299/Cys-368, and Cys-319/Cys-324. Asn-208 carries N-linked (GlcNAc...) asparagine; by host glycosylation. The chain crosses the membrane as a helical span at residues 395–415 (EQVLILVAVSSLCILLLASVL). The Cytoplasmic segment spans residues 416–496 (RALKVIATFT…VRQKMFNLTR (81 aa)). A golgi retention signal region spans residues 419–465 (KVIATFTWKIIKPFWWILSLLCRTCSKRLNKRAERLKESIHSLEEGL). The segment at 461-465 (LEEGL) is important for correct targeting of the glycoproteins to the Golgi complex but not for heterodimerization. The interval 497–513 (LSPVVVGMLCLACPVES) is internal signal sequence for glycoprotein C. Intrachain disulfides connect Cys-514–Cys-555, Cys-527–Cys-537, Cys-580–Cys-677, Cys-595–Cys-789, Cys-601–Cys-650, Cys-607–Cys-657, Cys-612–Cys-639, Cys-643–Cys-648, Cys-728–Cys-742, Cys-758–Cys-771, Cys-851–Cys-924, and Cys-861–Cys-864. Residues 514-977 (CSDSISVTAS…GWFKASWLRA (464 aa)) lie on the Lumenal side of the membrane. Residues 601 to 607 (CHLMGAC) are fusion loop. A fusion loop region spans residues 644-655 (GGALCQCFNMRP). N-linked (GlcNAc...) asparagine; by host glycosylation is found at Asn-691 and Asn-696. Asn-912 and Asn-949 each carry an N-linked (GlcNAc...) asparagine; by host glycan. A helical membrane pass occupies residues 978 to 998 (IWAILGGTVSLIIGVVIIYMV). Over 999 to 1008 (FTLCLKVKKS) the chain is Cytoplasmic.

The protein belongs to the phlebovirus envelope glycoprotein family. As to quaternary structure, homodimer. Heterodimer with glycoprotein C. Homotrimer (postfusion). Heterodimer with glycoprotein N. Homotrimer (postfusion). In terms of processing, specific enzymatic cleavages in vivo yield mature proteins including glycoprotein C and glycoprotein N. Post-translationally, the cytoplasmic tail is Palmitoylated. Glycosylated. Contains principally poly-N-acetyllactosamine glycans. In terms of processing, glycosylated. Contains principally oligomannose-type glycans that can attach to host CD209/DC-SIGN. Post-translationally, palmitoylated.

The protein resides in the virion membrane. It localises to the host Golgi apparatus membrane. It is found in the host endoplasmic reticulum membrane. In terms of biological role, structural component of the virion that interacts with glycoprotein C. It shields the hydrophobic fusion loops of the glycoprotein C, preventing premature fusion. The glycoprotein protrusions are arranged on an icosahedral lattice, with T=12 triangulation. They are able to attach the virion to the host cell receptor CD209/DC-SIGN and to promote fusion of membranes with the late endosome after endocytosis of the virion. Plays a role in the packaging of ribonucleoproteins during virus assembly. Functionally, structural component of the virion that interacts with glycoprotein N. Acts as a class II fusion protein that is activated upon acidification and subsequent repositioning of the glycoprotein N. The glycoprotein protrusions are arranged on an icosahedral lattice, with T=12 triangulation. They are able to attach the virion to the host cell receptor CD209/DC-SIGN and to promote fusion of membranes with the late endosome after endocytosis of the virion. This is Envelopment polyprotein (GP) from Homo sapiens (Human).